The following is a 207-amino-acid chain: Large ribosomal subunit protein uL4 (207 aa).

A disordered region spans residues 44–76 (KRRGTASAKTRSEVRGGGRKPWRQKGTGRARHG). The segment covering 60-76 (GGRKPWRQKGTGRARHG) has biased composition (basic residues).

The protein belongs to the universal ribosomal protein uL4 family. Part of the 50S ribosomal subunit.

In terms of biological role, one of the primary rRNA binding proteins, this protein initially binds near the 5'-end of the 23S rRNA. It is important during the early stages of 50S assembly. It makes multiple contacts with different domains of the 23S rRNA in the assembled 50S subunit and ribosome. Its function is as follows. Forms part of the polypeptide exit tunnel. This is Large ribosomal subunit protein uL4 from Natranaerobius thermophilus (strain ATCC BAA-1301 / DSM 18059 / JW/NM-WN-LF).